Here is a 79-residue protein sequence, read N- to C-terminus: Small ribosomal subunit protein bS18 (79 aa).

Belongs to the bacterial ribosomal protein bS18 family. Part of the 30S ribosomal subunit. Forms a tight heterodimer with protein bS6.

Binds as a heterodimer with protein bS6 to the central domain of the 16S rRNA, where it helps stabilize the platform of the 30S subunit. This is Small ribosomal subunit protein bS18 from Rhodopseudomonas palustris (strain HaA2).